Reading from the N-terminus, the 379-residue chain is Cytochrome b (379 aa).

The next 4 membrane-spanning stretches (helical) occupy residues 33–53, 77–98, 113–133, and 178–198; these read FGSL…FLAM, WLIR…FIHV, WNIG…GYVL, and FFAF…VHLL. Heme b-binding residues include histidine 83 and histidine 97. Heme b-binding residues include histidine 182 and histidine 196. Residue histidine 201 participates in a ubiquinone binding. Transmembrane regions (helical) follow at residues 226–246, 288–308, 320–340, and 347–367; these read TKDL…ALFF, LGGV…PLLN, VTQV…WIGG, and FTTI…ILIP.

It belongs to the cytochrome b family. In terms of assembly, the cytochrome bc1 complex contains 11 subunits: 3 respiratory subunits (MT-CYB, CYC1 and UQCRFS1), 2 core proteins (UQCRC1 and UQCRC2) and 6 low-molecular weight proteins (UQCRH/QCR6, UQCRB/QCR7, UQCRQ/QCR8, UQCR10/QCR9, UQCR11/QCR10 and a cleavage product of UQCRFS1). This cytochrome bc1 complex then forms a dimer. Requires heme b as cofactor.

It is found in the mitochondrion inner membrane. In terms of biological role, component of the ubiquinol-cytochrome c reductase complex (complex III or cytochrome b-c1 complex) that is part of the mitochondrial respiratory chain. The b-c1 complex mediates electron transfer from ubiquinol to cytochrome c. Contributes to the generation of a proton gradient across the mitochondrial membrane that is then used for ATP synthesis. The sequence is that of Cytochrome b (MT-CYB) from Akodon paranaensis (Parana grass mouse).